We begin with the raw amino-acid sequence, 395 residues long: Protein TAMALIN (395 aa).

The disordered stretch occupies residues 1 to 52 (MTLRRLRKLQQKEEAAATPDPAARTPDSEVAPAAPVPTPGPPAAAATPGPPA). Residues 16-33 (AATPDPAARTPDSEVAPA) are compositionally biased toward low complexity. Phosphothreonine is present on threonine 77. Serine 94 is modified (phosphoserine). The region spanning 101 to 190 (VLTLEKEDNQ…VLRLETLYGT (90 aa)) is the PDZ domain. An interaction with PSCD3 region spans residues 181–258 (VLRLETLYGT…GAGLLPGSLP (78 aa)). Position 237 is a phosphotyrosine (tyrosine 237). Omega-N-methylarginine is present on arginine 270. The tract at residues 293–349 (SEPPALPPPPPPARAFGPGPAETPAVGPGPGPRAALSRSASVRCAGPGGGGGGGAPG) is disordered. The segment covering 296–305 (PALPPPPPPA) has biased composition (pro residues). The segment covering 338–348 (GPGGGGGGGAP) has biased composition (gly residues). Serine 387 is modified (phosphoserine).

As to quaternary structure, heteromer. Composed of TAMALIN, CYTH2 and at least one GRM1. Also interacts with CYTH3, GRM2, GRM3 and GRM5.

The protein resides in the cytoplasm. It is found in the perinuclear region. The protein localises to the cell membrane. Its subcellular location is the postsynaptic cell membrane. Plays a role in intracellular trafficking and contributes to the macromolecular organization of group 1 metabotropic glutamate receptors (mGluRs) at synapses. The chain is Protein TAMALIN from Homo sapiens (Human).